The primary structure comprises 171 residues: Putative pre-16S rRNA nuclease (171 aa).

The protein belongs to the YqgF nuclease family.

It localises to the cytoplasm. Its function is as follows. Could be a nuclease involved in processing of the 5'-end of pre-16S rRNA. The polypeptide is Putative pre-16S rRNA nuclease (Corynebacterium diphtheriae (strain ATCC 700971 / NCTC 13129 / Biotype gravis)).